A 671-amino-acid polypeptide reads, in one-letter code: UvrABC system protein B (671 aa).

The Helicase ATP-binding domain maps to 25-178 (EGIKKGYKHQ…DAMLKKLVEI (154 aa)). 38 to 45 (GVTGSGKT) contacts ATP. Positions 91-114 (YYDYYQPEAYIPETDTYIEKDALI) match the Beta-hairpin motif. The Helicase C-terminal domain occupies 435 to 601 (QVEDLLEEIH…TVKSKIKDIL (167 aa)). The UVR domain maps to 626–661 (EETIKKLEQEMKHAAENLEFEKAAEIRDKIFKIKEK).

It belongs to the UvrB family. As to quaternary structure, forms a heterotetramer with UvrA during the search for lesions. Interacts with UvrC in an incision complex.

It is found in the cytoplasm. Its function is as follows. The UvrABC repair system catalyzes the recognition and processing of DNA lesions. A damage recognition complex composed of 2 UvrA and 2 UvrB subunits scans DNA for abnormalities. Upon binding of the UvrA(2)B(2) complex to a putative damaged site, the DNA wraps around one UvrB monomer. DNA wrap is dependent on ATP binding by UvrB and probably causes local melting of the DNA helix, facilitating insertion of UvrB beta-hairpin between the DNA strands. Then UvrB probes one DNA strand for the presence of a lesion. If a lesion is found the UvrA subunits dissociate and the UvrB-DNA preincision complex is formed. This complex is subsequently bound by UvrC and the second UvrB is released. If no lesion is found, the DNA wraps around the other UvrB subunit that will check the other stand for damage. In Thermodesulfovibrio yellowstonii (strain ATCC 51303 / DSM 11347 / YP87), this protein is UvrABC system protein B.